The chain runs to 484 residues: Schwannomin-interacting protein 1 (484 aa).

Residues M1 to G28 are compositionally biased toward basic and acidic residues. Disordered regions lie at residues M1–L74, K86–D220, Q232–S258, and S305–D350. Low complexity predominate over residues S33 to S67. Residues W92 to D106 are compositionally biased toward acidic residues. A compositionally biased stretch (basic and acidic residues) spans R107 to G120. Over residues S123–A137 the composition is skewed to low complexity. A compositionally biased stretch (basic and acidic residues) spans H150–H159. The segment covering R239–Q252 has biased composition (polar residues). Residues G306–T320 show a composition bias toward basic and acidic residues. A compositionally biased stretch (polar residues) spans S321–Q332. Residues T341–D350 are compositionally biased toward acidic residues. A coiled-coil region spans residues I421 to E455.

Belongs to the SCHIP1 family. As to quaternary structure, homooligomer (via coiled coil domain). Interacts with NF2; the interaction is direct. Interacts with ANK3.

The protein is Schwannomin-interacting protein 1 of Mus musculus (Mouse).